Reading from the N-terminus, the 117-residue chain is uncharacterized protein (117 aa).

Residues 1 to 38 form the signal peptide; the sequence is MIIDSSRIPSFTQLHSTMTRAPLLLLCVALVLLGHVNG.

The protein resides in the secreted. This is an uncharacterized protein from Homo sapiens (Human).